Consider the following 103-residue polypeptide: Large ribosomal subunit protein bL21 (103 aa).

This sequence belongs to the bacterial ribosomal protein bL21 family. In terms of assembly, part of the 50S ribosomal subunit. Contacts protein L20.

In terms of biological role, this protein binds to 23S rRNA in the presence of protein L20. The sequence is that of Large ribosomal subunit protein bL21 from Rhodococcus erythropolis (strain PR4 / NBRC 100887).